The chain runs to 194 residues: Large ribosomal subunit protein bL17 (194 aa).

Positions alanine 126 to glutamate 194 are disordered. Basic residues predominate over residues threonine 131 to glycine 140. Polar residues-rich tracts occupy residues alanine 144–alanine 161 and leucine 181–glutamate 194.

It belongs to the bacterial ribosomal protein bL17 family. As to quaternary structure, part of the 50S ribosomal subunit. Contacts protein L32.

This Amoebophilus asiaticus (strain 5a2) protein is Large ribosomal subunit protein bL17.